The chain runs to 159 residues: Ribonuclease H (159 aa).

In terms of domain architecture, RNase H type-1 spans 8–150 (NLKEITMYTD…CDQLAVAAAK (143 aa)). The Mg(2+) site is built by D17, E55, D77, and D142.

It belongs to the RNase H family. As to quaternary structure, monomer. The cofactor is Mg(2+).

The protein localises to the cytoplasm. The catalysed reaction is Endonucleolytic cleavage to 5'-phosphomonoester.. Functionally, endonuclease that specifically degrades the RNA of RNA-DNA hybrids. The chain is Ribonuclease H from Desulforamulus reducens (strain ATCC BAA-1160 / DSM 100696 / MI-1) (Desulfotomaculum reducens).